Consider the following 283-residue polypeptide: Polyamine aminopropyltransferase (283 aa).

The PABS domain occupies 2–237 (ELWYTEEHTD…GHWLFGFASK (236 aa)). Q31 is a binding site for S-methyl-5'-thioadenosine. 2 residues coordinate spermidine: H62 and D86. Residues E106 and 137 to 138 (DG) each bind S-methyl-5'-thioadenosine. Residue D155 is the Proton acceptor of the active site. 155–158 (DSTD) serves as a coordination point for spermidine. P162 lines the S-methyl-5'-thioadenosine pocket.

It belongs to the spermidine/spermine synthase family. In terms of assembly, homodimer or homotetramer.

The protein resides in the cytoplasm. The enzyme catalyses S-adenosyl 3-(methylsulfanyl)propylamine + putrescine = S-methyl-5'-thioadenosine + spermidine + H(+). The protein operates within amine and polyamine biosynthesis; spermidine biosynthesis; spermidine from putrescine: step 1/1. In terms of biological role, catalyzes the irreversible transfer of a propylamine group from the amino donor S-adenosylmethioninamine (decarboxy-AdoMet) to putrescine (1,4-diaminobutane) to yield spermidine. The chain is Polyamine aminopropyltransferase from Clostridium perfringens (strain 13 / Type A).